The following is a 207-amino-acid chain: Large ribosomal subunit protein uL4 (207 aa).

The tract at residues 53–85 (ERSDVARTGKKFGRQKGGGTARHGDRKAPIFIG) is disordered.

This sequence belongs to the universal ribosomal protein uL4 family. Part of the 50S ribosomal subunit.

Functionally, one of the primary rRNA binding proteins, this protein initially binds near the 5'-end of the 23S rRNA. It is important during the early stages of 50S assembly. It makes multiple contacts with different domains of the 23S rRNA in the assembled 50S subunit and ribosome. Its function is as follows. Forms part of the polypeptide exit tunnel. The chain is Large ribosomal subunit protein uL4 from Novosphingobium aromaticivorans (strain ATCC 700278 / DSM 12444 / CCUG 56034 / CIP 105152 / NBRC 16084 / F199).